A 439-amino-acid polypeptide reads, in one-letter code: Serine--tRNA ligase (439 aa).

237-239 (TAE) contacts L-serine. 268–270 (RAE) serves as a coordination point for ATP. E291 contributes to the L-serine binding site. 362-365 (EISS) serves as a coordination point for ATP. Residue S397 participates in L-serine binding.

Belongs to the class-II aminoacyl-tRNA synthetase family. Type-1 seryl-tRNA synthetase subfamily. As to quaternary structure, homodimer. The tRNA molecule binds across the dimer.

The protein localises to the cytoplasm. The catalysed reaction is tRNA(Ser) + L-serine + ATP = L-seryl-tRNA(Ser) + AMP + diphosphate + H(+). It catalyses the reaction tRNA(Sec) + L-serine + ATP = L-seryl-tRNA(Sec) + AMP + diphosphate + H(+). Its pathway is aminoacyl-tRNA biosynthesis; selenocysteinyl-tRNA(Sec) biosynthesis; L-seryl-tRNA(Sec) from L-serine and tRNA(Sec): step 1/1. Functionally, catalyzes the attachment of serine to tRNA(Ser). Is also able to aminoacylate tRNA(Sec) with serine, to form the misacylated tRNA L-seryl-tRNA(Sec), which will be further converted into selenocysteinyl-tRNA(Sec). This chain is Serine--tRNA ligase, found in Afipia carboxidovorans (strain ATCC 49405 / DSM 1227 / KCTC 32145 / OM5) (Oligotropha carboxidovorans).